We begin with the raw amino-acid sequence, 878 residues long: Probable receptor-like protein kinase At4g39110 (878 aa).

Residues 1–43 form the signal peptide; that stretch reads MEIRKKPNIFTVLVIDFSSKPSMALLLAILLFLSGPSASAVAA. The Extracellular segment spans residues 44-440; sequence AAVGPATGFK…GRTTGMGKHG (397 aa). N-linked (GlcNAc...) asparagine glycans are attached at residues N170, N183, N254, N317, and N382. Residues 441 to 461 traverse the membrane as a helical segment; the sequence is MVATAGFVMMFGAFIGLGAMV. At 462–878 the chain is on the cytoplasmic side; the sequence is YKWKKRPQDW…FTQFANLNGR (417 aa). Residues 526–798 form the Protein kinase domain; sequence FEASQIIGVG…GDVLWNLEYA (273 aa). ATP contacts are provided by residues 532 to 540 and K554; that span reads IGVGGFGNV. The active-site Proton acceptor is D650. Positions 808 to 844 are disordered; the sequence is GKAEETENAKPDVVTPGSVPVSDPSPITPSVTTNEAA.

The protein belongs to the protein kinase superfamily. Ser/Thr protein kinase family.

The protein resides in the membrane. In Arabidopsis thaliana (Mouse-ear cress), this protein is Probable receptor-like protein kinase At4g39110.